A 144-amino-acid polypeptide reads, in one-letter code: Protein cornichon homolog 1 (144 aa).

Residues 1-10 are Cytoplasmic-facing; that stretch reads MAFTFAAFCY. The helical transmembrane segment at 11–31 threads the bilayer; sequence MLALLLTAALIFFAIWHIIAF. The Lumenal portion of the chain corresponds to 32–56; the sequence is DELKTDYKNPIDQCNTLNPLVLPEY. Residues 57-77 traverse the membrane as a helical segment; the sequence is LIHAFFCVMFLCAAEWLTLGL. Over 78 to 122 the chain is Cytoplasmic; the sequence is NMPLLAYHIWRYMSRPVMSGPGLYDPTTIMNADILAYCQKEGWCK. The chain crosses the membrane as a helical span at residues 123–143; it reads LAFYLLAFFYYLYGMIYVLVS. Position 144 (Ser-144) is a topological domain, lumenal.

The protein belongs to the cornichon family. As to quaternary structure, interacts with AREG immature precursor and with immature TGFA, i.e. with a prosegment and lacking full N-glycosylation, but not with the fully N-glycosylated form. In the Golgi apparatus, may form a complex with GORASP55 and transmembrane TGFA.

It localises to the endoplasmic reticulum membrane. The protein resides in the golgi apparatus membrane. Involved in the selective transport and maturation of TGF-alpha family proteins. The protein is Protein cornichon homolog 1 (CNIH1) of Bos taurus (Bovine).